The sequence spans 190 residues: Coat protein (190 aa).

The protein belongs to the potexvirus capsid protein family.

The protein localises to the virion. Required for genome encapsidation. Forms ribonucleoprotein complexes along with TGB1 helicase and viral RNA. This chain is Coat protein, found in White clover mosaic virus (strain M) (WCMV).